We begin with the raw amino-acid sequence, 457 residues long: Protein trichome birefringence-like 4 (457 aa).

The chain crosses the membrane as a helical; Signal-anchor for type II membrane protein span at residues 19–37 (IFLTSLFFLSLFLLSSSSL). A GDS motif motif is present at residues 173 to 175 (GDS). Residues 420 to 434 (DCSHWCLPGVPDSWN) carry the DCXHWCLPGXXDXWN motif motif.

Belongs to the PC-esterase family. TBL subfamily.

The protein resides in the membrane. Its function is as follows. May act as a bridging protein that binds pectin and other cell wall polysaccharides. Probably involved in maintaining esterification of pectins. May be involved in the specific O-acetylation of cell wall polymers. The sequence is that of Protein trichome birefringence-like 4 (TBL4) from Arabidopsis thaliana (Mouse-ear cress).